An 897-amino-acid chain; its full sequence is Interleukin enhancer-binding factor 3 (897 aa).

Residues 5 to 378 (RIFVNDDRHV…PMKRPMEEDG (374 aa)) form the DZF domain. The interval 52–85 (QEKGNSELSEAENMDTPPDDESKEGAGEQKAEHM) is disordered. Positions 60 to 73 (SEAENMDTPPDDES) are enriched in acidic residues. Residue Thr67 is modified to Phosphothreonine. Over residues 74 to 85 (KEGAGEQKAEHM) the composition is skewed to basic and acidic residues. Lys100 carries the N6-acetyllysine modification. A Phosphothreonine; by PKR modification is found at Thr188. A Phosphoserine modification is found at Ser190. A Glycyl lysine isopeptide (Lys-Gly) (interchain with G-Cter in ubiquitin) cross-link involves residue Lys297. Thr315 is subject to Phosphothreonine; by PKR. Lys348 is covalently cross-linked (Glycyl lysine isopeptide (Lys-Gly) (interchain with G-Cter in SUMO1)). The tract at residues 363–401 (TTYAITPMKRPMEEDGEEKSPSKKKKKIQKKEEKAEPPQ) is disordered. Positions 371-389 (KRPMEEDGEEKSPSKKKKK) match the Bipartite nuclear localization signal motif. Residues 372–383 (RPMEEDGEEKSP) show a composition bias toward basic and acidic residues. Residues Ser382 and Ser384 each carry the phosphoserine modification. A Glycyl lysine isopeptide (Lys-Gly) (interchain with G-Cter in SUMO2) cross-link involves residue Lys396. The DRBM 1 domain occupies 398 to 467 (EPPQAMNALM…AVKVLQDMGL (70 aa)). Lys460 carries the N6-acetyllysine modification. Disordered stretches follow at residues 466–524 (GLPT…LTKH), 624–662 (GMGGPMHNEAPPPPNIRGRGRGGNIRGRGRGRGFGGTNH), and 720–897 (GDSY…YQYR). The span at 472-481 (EGRDSSKGED) shows a compositional bias: basic and acidic residues. A phosphoserine mark is found at Ser476, Ser477, Ser482, and Ser486. Lys489 is covalently cross-linked (Glycyl lysine isopeptide (Lys-Gly) (interchain with G-Cter in SUMO2)). The segment covering 499 to 508 (VEAVSNPSSV) has biased composition (low complexity). The 67-residue stretch at 524-590 (HGKNPVMELN…ALAALEKLFP (67 aa)) folds into the DRBM 2 domain. Residues 609-897 (RGGPKFAAKP…TEHSMNYQYR (289 aa)) are interaction with PRMT1. Over residues 644 to 662 (RGGNIRGRGRGRGFGGTNH) the composition is skewed to gly residues. Low complexity-rich tracts occupy residues 745 to 769 (SYSSGYQSHQGQQQPYNQSQYSSYG), 783 to 794 (GSYSSYSNSYNS), and 802 to 812 (DYSYDSKFNYS). Ser794, Ser812, Ser814, and Ser818 each carry phosphoserine. Positions 813–822 (GSGGRSGGNS) are enriched in gly residues. Positions 823-833 (YGSSGSSYNTG) are enriched in low complexity. Positions 834 to 844 (SHGGYGAGSGG) are enriched in gly residues. The span at 845–885 (SSSYQGKQGGYSSQSNYSSPGSSQSYSGPASSYQSSQGGYS) shows a compositional bias: low complexity.

As to quaternary structure, identified in a IGF2BP1-dependent mRNP granule complex containing untranslated mRNAs. Interacts with FUS and SMN. Interacts (via C-terminus) with PRMT1. Forms a complex with ILF2. Can also bind to PRKDC/XRCC7: this may stabilize the interaction of PRKDC/XRCC7 and the heterodimeric complex of XRCC6/KU70 and XRCC5/KU80. Forms a heteromeric complex with ZNF346 and ILF3. Found in a nuclear export complex with XPO5, ILF3, Ran and double-stranded RNA or double-stranded minihelix VA1 RNA. Found in a nuclear export complex with XPO5, RAN, ILF3, ZNF346 and double-stranded RNA. Interacts with XPO5 and ZNF346. Forms a complex with ILF2, YLPM1, KHDRBS1, RBMX, NCOA5 and PPP1CA. Interacts with AGO1 and AGO2. Interacts with DHX36; this interaction occurs in a RNA-dependent manner. Interacts with ELAVL1; this interaction occurs in a RNA-dependent manner. Interacts with HAVCR2; this interaction promotes ILF3 ubiquitination and subsequent degradation. Phosphorylated at Thr-188 and Thr-315 by PKR in response to RNA viruses. This phosphorylation results in the dissociation of ILF2 from the ILF2-ILF3 complex resulting in a cytoplasmic sequestration of ILF3 where it can bind to viral RNAs and impede viral replication. Post-translationally, methylated by protein arginine N-methyltransferase 1.

The protein localises to the nucleus. Its subcellular location is the nucleolus. The protein resides in the cytoplasm. Functionally, RNA-binding protein that plays an essential role in the biogenesis of circular RNAs (circRNAs) which are produced by back-splicing circularization of pre-mRNAs. Within the nucleus, promotes circRNAs processing by stabilizing the regulatory elements residing in the flanking introns of the circularized exons. Plays thereby a role in the back-splicing of a subset of circRNAs. As a consequence, participates in a wide range of transcriptional and post-transcriptional processes. Binds to poly-U elements and AU-rich elements (AREs) in the 3'-UTR of target mRNAs. Upon viral infection, ILF3 accumulates in the cytoplasm and participates in the innate antiviral response. Mechanistically, ILF3 becomes phosphorylated and activated by the double-stranded RNA-activated protein kinase/PKR which releases ILF3 from cellular mature circRNAs. In turn, unbound ILF3 molecules are able to interact with and thus inhibit viral mRNAs. The protein is Interleukin enhancer-binding factor 3 (Ilf3) of Rattus norvegicus (Rat).